Consider the following 130-residue polypeptide: Small ribosomal subunit protein uS9 (130 aa).

This sequence belongs to the universal ribosomal protein uS9 family.

The chain is Small ribosomal subunit protein uS9 from Shewanella amazonensis (strain ATCC BAA-1098 / SB2B).